Here is a 126-residue protein sequence, read N- to C-terminus: Fatty acid-binding protein 2, liver (126 aa).

Cholate-binding positions include 54 to 56, 99 to 101, and arginine 121; these read TPN and HIQ.

The protein belongs to the calycin superfamily. Fatty-acid binding protein (FABP) family.

The protein localises to the cytoplasm. In terms of biological role, binds free fatty acids and their coenzyme A derivatives, bilirubin, and some other small molecules in the cytoplasm. May be involved in intracellular lipid transport. The specificity of axolotl L-FABP differs from that of LB-FABP. Binds 2 ligands per protein molecule. The protein is Fatty acid-binding protein 2, liver of Ambystoma mexicanum (Axolotl).